A 181-amino-acid chain; its full sequence is Mitochondrial inner membrane protein Mpv17 (181 aa).

A run of 4 helical transmembrane segments spans residues 20 to 37 (MCIAGTISGSGDCLAQYL), 51 to 67 (FSFLSSCFMAPSLFIWF), 86 to 103 (LCIDQLCFSPCFNAAILF), and 152 to 169 (VILNQVVAFFWNCYLSYI).

Belongs to the peroxisomal membrane protein PXMP2/4 family.

It is found in the mitochondrion inner membrane. Functionally, involved in mitochondria homeostasis. This is Mitochondrial inner membrane protein Mpv17 from Caenorhabditis elegans.